The primary structure comprises 476 residues: Cysteine--tRNA ligase (476 aa).

Position 36 (cysteine 36) interacts with Zn(2+). The short motif at 38–48 (PTVYDYAHIGN) is the 'HIGH' region element. Cysteine 221, histidine 246, and glutamate 250 together coordinate Zn(2+). The short motif at 278-282 (KMSKS) is the 'KMSKS' region element. Lysine 281 lines the ATP pocket.

It belongs to the class-I aminoacyl-tRNA synthetase family. In terms of assembly, monomer. Requires Zn(2+) as cofactor.

It is found in the cytoplasm. It catalyses the reaction tRNA(Cys) + L-cysteine + ATP = L-cysteinyl-tRNA(Cys) + AMP + diphosphate. The chain is Cysteine--tRNA ligase from Chlamydia abortus (strain DSM 27085 / S26/3) (Chlamydophila abortus).